A 102-amino-acid polypeptide reads, in one-letter code: Protein PDF (102 aa).

Residues 1-24 (MARYTYLVALVLLAICCQWGYCGA) form the signal peptide. An Alanine amide modification is found at Ala-100.

The protein belongs to the arthropod PDH family. As to expression, predominantly expressed in adult head. Expressed at higher level in males than in females. In adult brain, it is specifically expressed in the ventral lateral neurons (LNvs) as well as in 2-4 tritocerebral cells and 4-6 abdominal cells.

It is found in the secreted. Functionally, neuropeptide PDF is the main transmitter regulating circadian locomotor rhythms. Required to maintain behavioral rhythms under constant conditions by coordinating pacemaker interactions in the circadian system. Together with CCHa1, involved in regulating intensity and periodicity of daytime activity, possibly by modulating rhythmic expression of circadian protein PER/period in a subset of clock neurons, but not TIM/timeless. Acts on small and large ventral lateral neurons to control sleep and regulates the state transition from sleep to wake. The sequence is that of Protein PDF (Pdf) from Drosophila melanogaster (Fruit fly).